The sequence spans 131 residues: D-ribose pyranase (131 aa).

The active-site Proton donor is histidine 20. Residues aspartate 28, histidine 98, and 120-122 (YAN) contribute to the substrate site.

It belongs to the RbsD / FucU family. RbsD subfamily. Homodecamer.

Its subcellular location is the cytoplasm. It carries out the reaction beta-D-ribopyranose = beta-D-ribofuranose. The protein operates within carbohydrate metabolism; D-ribose degradation; D-ribose 5-phosphate from beta-D-ribopyranose: step 1/2. Its function is as follows. Catalyzes the interconversion of beta-pyran and beta-furan forms of D-ribose. This is D-ribose pyranase from Bacillus thuringiensis (strain Al Hakam).